A 244-amino-acid chain; its full sequence is UPF0173 metal-dependent hydrolase Rcas_3617 (244 aa).

Belongs to the UPF0173 family.

This Roseiflexus castenholzii (strain DSM 13941 / HLO8) protein is UPF0173 metal-dependent hydrolase Rcas_3617.